Consider the following 299-residue polypeptide: ATP phosphoribosyltransferase (299 aa).

The protein belongs to the ATP phosphoribosyltransferase family. Long subfamily. As to quaternary structure, equilibrium between an active dimeric form, an inactive hexameric form and higher aggregates. Interconversion between the various forms is largely reversible and is influenced by the natural substrates and inhibitors of the enzyme. It depends on Mg(2+) as a cofactor.

The protein localises to the cytoplasm. The catalysed reaction is 1-(5-phospho-beta-D-ribosyl)-ATP + diphosphate = 5-phospho-alpha-D-ribose 1-diphosphate + ATP. It functions in the pathway amino-acid biosynthesis; L-histidine biosynthesis; L-histidine from 5-phospho-alpha-D-ribose 1-diphosphate: step 1/9. With respect to regulation, feedback inhibited by histidine. Its function is as follows. Catalyzes the condensation of ATP and 5-phosphoribose 1-diphosphate to form N'-(5'-phosphoribosyl)-ATP (PR-ATP). Has a crucial role in the pathway because the rate of histidine biosynthesis seems to be controlled primarily by regulation of HisG enzymatic activity. This Blochmanniella pennsylvanica (strain BPEN) protein is ATP phosphoribosyltransferase.